A 249-amino-acid polypeptide reads, in one-letter code: Ribonuclease PH (249 aa).

Residues arginine 86 and 124 to 126 contribute to the phosphate site; that span reads GTR.

It belongs to the RNase PH family. Homohexameric ring arranged as a trimer of dimers.

It carries out the reaction tRNA(n+1) + phosphate = tRNA(n) + a ribonucleoside 5'-diphosphate. In terms of biological role, phosphorolytic 3'-5' exoribonuclease that plays an important role in tRNA 3'-end maturation. Removes nucleotide residues following the 3'-CCA terminus of tRNAs; can also add nucleotides to the ends of RNA molecules by using nucleoside diphosphates as substrates, but this may not be physiologically important. Probably plays a role in initiation of 16S rRNA degradation (leading to ribosome degradation) during starvation. This is Ribonuclease PH from Clostridium botulinum (strain Eklund 17B / Type B).